We begin with the raw amino-acid sequence, 628 residues long: Patulin synthase (628 aa).

An N-terminal signal peptide occupies residues 1-19 (MRLTSGIFHAAIAVAAVGA). Asn49 is a glycosylation site (N-linked (GlcNAc...) asparagine). FAD contacts are provided by residues 61–62 (TA) and 82–83 (EA). A glycan (N-linked (GlcNAc...) asparagine) is linked at Asn93. 148 to 151 (NYMA) lines the FAD pocket. 6 N-linked (GlcNAc...) asparagine glycosylation sites follow: Asn198, Asn261, Asn283, Asn429, Asn486, and Asn526. Residue His564 is the Proton acceptor of the active site. A glycan (N-linked (GlcNAc...) asparagine) is linked at Asn575. FAD is bound by residues Ala598 and 609–610 (PQ).

It belongs to the GMC oxidoreductase family. FAD serves as cofactor.

The protein resides in the cytoplasm. It is found in the cell cortex. The protein localises to the vacuole. It localises to the secreted. Its subcellular location is the cell wall. It catalyses the reaction (E)-ascladiol + A = patulin + AH2. It functions in the pathway mycotoxin biosynthesis; patulin biosynthesis. Functionally, patulin synthase; part of the gene cluster that mediates the biosynthesis of patulin, an acetate-derived tetraketide mycotoxin produced by several fungal species that shows antimicrobial properties against several bacteria. PatE catalyzes the last step of the pathway which is the conversion of E-ascladiol to patulin. The pathway begins with the synthesis of 6-methylsalicylic acid by the polyketide synthase (PKS) patK via condensation of acetate and malonate units. The 6-methylsalicylic acid decarboxylase patG then catalyzes the decarboxylation of 6-methylsalicylic acid to yield m-cresol (also known as 3-methylphenol). These first reactions occur in the cytosol. The intermediate m-cresol is then transported into the endoplasmic reticulum where the cytochrome P450 monooxygenase patH converts it to m-hydroxybenzyl alcohol, which is further converted to gentisyl alcohol by the cytochrome P450 monooxygenase patI. The oxidoreductases patJ and patO further convert gentisyl alcohol to isoepoxydon in the vacuole. PatN catalyzes then the transformation of isoepoxydon into phyllostine. The cluster protein patF is responsible for the conversion from phyllostine to neopatulin whereas the alcohol dehydrogenase patD converts neopatulin to E-ascladiol. The steps between isoepoxydon and E-ascladiol occur in the cytosol, and E-ascladiol is probably secreted to the extracellular space by one of the cluster-specific transporters patC or patM. Finally, the secreted patulin synthase patE catalyzes the conversion of E-ascladiol to patulin. The chain is Patulin synthase from Penicillium expansum (Blue mold rot fungus).